We begin with the raw amino-acid sequence, 1142 residues long: Desmoglein-2.1 (1142 aa).

An N-terminal signal peptide occupies residues 1–18; sequence MARRISPVVAFLLCFGLS. Residues 19–38 constitute a propeptide that is removed on maturation; sequence HFFEAEARLQHSVALHRQKR. The Extracellular segment spans residues 39–643; that stretch reads EWIVPPQILE…AKKGSRLGPA (605 aa). 4 Cadherin domains span residues 64–148, 156–258, 259–416, and 417–527; these read SDKE…APVF, VDEL…VPTL, GGPY…GPKF, and FPGT…CPTL. The N-linked (GlcNAc...) asparagine glycan is linked to asparagine 115. Positions 369–389 are disordered; it reads SGAAGGAGAMGGASGSGGGTG. N-linked (GlcNAc...) asparagine glycans are attached at residues asparagine 490 and asparagine 576. Residues 644-664 traverse the membrane as a helical segment; that stretch reads GIGLLLLALLALLLIPLLLLL. Residues 665 to 1142 are Cytoplasmic-facing; it reads CTCGMTGAFT…RKVVTTQSVK (478 aa). Desmoglein repeat repeat units lie at residues 948 to 974, 975 to 998, 999 to 1039, and 1040 to 1071; these read VEQQ…NSGP, VAEG…ERMV, LVFR…VLQG, and TIQR…NGIS.

It localises to the cell junction. It is found in the desmosome. Its subcellular location is the cell membrane. The protein localises to the cytoplasm. A component of desmosome cell-cell junctions which are required for positive regulation of cellular adhesion. Involved in the interaction of plaque proteins and intermediate filaments mediating cell-cell adhesion. Required for embryogenesis, specifically for progression of epiboly and normal convergence-extension movements during gastrulation. The protein is Desmoglein-2.1 of Danio rerio (Zebrafish).